Reading from the N-terminus, the 1943-residue chain is Trichohyalin (1943 aa).

An S-100-like region spans residues 1-91; it reads MSPLLRSICD…AQACYYALGQ (91 aa). 2 EF-hand domains span residues 23–48 and 49–84; these read CDGA…LRRP and HDPK…VAQA. The Ca(2+) site is built by Asp32, Asp62, Asp64, Asn66, Arg68, and Glu73. 3 disordered regions span residues 110 to 164, 186 to 209, and 222 to 274; these read LQDR…LEQR, RRAE…DEEQ, and GREE…LQEE. Positions 197–209 are enriched in basic and acidic residues; the sequence is KGHETEEFPDEEQ. The stretch at 314–326 is one 1-1; approximate repeat; it reads RREQQEERREQQE. Residues 314–377 are 5 X 13 AA tandem repeats of R-R-E-Q-E-E-E-R-R-E-Q-Q-L; the sequence is RREQQEERRE…QEEERREQQL (64 aa). The 1-2; approximate repeat unit spans residues 327–339; it reads RREQQEERREQQL. Residues 340–351 form a 1-3; approximate repeat; that stretch reads RREQEERREQQL. 10 tandem repeats follow at residues 352–364, 365–377, 378–383, 384–389, 390–395, 396–401, 402–407, 408–413, 414–419, and 420–425. The tract at residues 378–425 is 8 X 6 AA tandem repeats of R-R-E-Q-Q-L; sequence RREQQLRREQQLRREQQLRREQQLRREQQLRREQQLRREQQLRREQQL. Residues 425-683 form a 9 X 28 AA approximate tandem repeats region; it reads LRREQEEERH…REHEEERREQ (259 aa). Disordered stretches follow at residues 426–485, 509–546, 608–819, and 837–872; these read RREQ…EERR, REQE…EERR, ERLE…EKEQ, and EEQL…RRDQ. Basic and acidic residues-rich tracts occupy residues 608-684, 724-781, 789-812, and 859-872; these read ERLE…REQE, RKQE…ERGR, PLRE…RFLP, and DQER…RRDQ. 10 tandem repeats follow at residues 906–935, 936–965, 966–995, 996–1025, 1026–1055, 1056–1085, 1086–1115, 1116–1145, 1146–1175, and 1176–1204. The tract at residues 906–1204 is 10 X 30 AA tandem repeats; sequence LQEEEEELQR…RERQYREEEE (299 aa). The segment covering 950 to 992 has biased composition (basic and acidic residues); the sequence is KRRRQERERQYRKDKKLQQKEEQLLGEEPEKRRRQEREKKYRE. Disordered stretches follow at residues 950-1000, 1046-1120, 1137-1162, 1193-1371, 1404-1435, 1492-1691, 1757-1820, 1834-1864, and 1876-1928; these read KRRR…QQEE, RERQ…QQEE, ERQY…EKRR, QERE…RHQE, REQQ…FREE, QQLR…ERDR, PERE…RDGK, EQRL…EQEL, and RERK…VRSS. Residues 1052 to 1064 are compositionally biased toward acidic residues; the sequence is EEEELQQEEEQLL. Composition is skewed to basic and acidic residues over residues 1065–1085 and 1092–1111; these read GEER…KEEE and QLLR…RQCR. Acidic residues predominate over residues 1142–1151; sequence EEEEVQQEEE. Over residues 1152 to 1162 the composition is skewed to basic and acidic residues; that stretch reads QLLREEPEKRR. 2 stretches are compositionally biased toward basic and acidic residues: residues 1214-1263 and 1274-1371; these read YRDE…DRQS and QQER…RHQE. The interval 1292–1894 is 23 X 26 AA approximate tandem repeats; the sequence is HFPEEEQLER…IRRQQKEEQR (603 aa). 3 stretches are compositionally biased toward basic and acidic residues: residues 1492–1524, 1533–1673, and 1682–1691; these read QQLR…EQQL, FLQE…REEE, and QQLRRQERDR. Over residues 1876 to 1912 the composition is skewed to basic and acidic residues; sequence RERKLREEHIRRQQKEEQRHRQVGEIKSQEGKGHGRL.

This sequence belongs to the S100-fused protein family. In terms of assembly, monomer. Substrate of transglutaminase. Some 200 arginines are probably converted to citrullines by peptidylarginine deimidase. As to expression, found in the hard keratinizing tissues such as the inner root sheath (IRS) of hair follicles and medulla, and in the filiform papillae of dorsal tongue epithelium.

Functionally, intermediate filament-associated protein that associates in regular arrays with keratin intermediate filaments (KIF) of the inner root sheath cells of the hair follicle and the granular layer of the epidermis. It later becomes cross-linked to KIF by isodipeptide bonds. It may serve as scaffold protein, together with involucrin, in the organization of the cell envelope or even anchor the cell envelope to the KIF network. It may be involved in its own calcium-dependent postsynthetic processing during terminal differentiation. This chain is Trichohyalin (TCHH), found in Homo sapiens (Human).